We begin with the raw amino-acid sequence, 527 residues long: Homeobox protein NOBOX (527 aa).

Disordered stretches follow at residues 1–126, 194–245, 271–306, and 488–527; these read MEPT…DLKK, VEKL…DVFP, VTPPLLSPPPIRRANLPLPLGPVQTPQVLPPMRDVP, and ETGSSLSKMSDEQTSSSLEQPALEEVRDKNKNSHAAGAKE. The homeobox DNA-binding region spans 136–195; the sequence is RKKTRTLYRSDQLEELERIFQEDHYPDSDKRHEISQMVGVTPQRIMVWFQNRRAKWRKVE. Positions 194-203 are enriched in basic and acidic residues; that stretch reads VEKLNEKETK. The span at 488 to 506 shows a compositional bias: polar residues; sequence ETGSSLSKMSDEQTSSSLE. Basic and acidic residues predominate over residues 511–527; that stretch reads EEVRDKNKNSHAAGAKE.

Specifically expressed in ovaries and testes. In ovaries, expressed in oocytes from primordial through antral follicles but not in granulosa cells, theca cells and corpora lutea.

The protein localises to the nucleus. Its function is as follows. Transcription factor which plays an essential role in postnatal follicle development. Binds preferentially to the DNA sequences 5'-TAATTG-3', 5'-TAGTTG-3' and 5'-TAATTA-3'. Directly regulates the transcription of POU5F1 and GDF9 during early folliculogenesis. The chain is Homeobox protein NOBOX (Nobox) from Mus musculus (Mouse).